The primary structure comprises 149 residues: Transcriptional repressor NrdR (149 aa).

Residues cysteine 3–cysteine 34 fold into a zinc finger. An ATP-cone domain is found at proline 49 to glutamate 139.

It belongs to the NrdR family. Zn(2+) is required as a cofactor.

Functionally, negatively regulates transcription of bacterial ribonucleotide reductase nrd genes and operons by binding to NrdR-boxes. The chain is Transcriptional repressor NrdR from Photobacterium profundum (strain SS9).